Here is a 20-residue protein sequence, read N- to C-terminus: VNPIILGVLPKFVCLITKKC.

An intrachain disulfide couples Cys14 to Cys20.

The protein belongs to the frog skin active peptide (FSAP) family. Brevinin subfamily. Expressed by the skin glands.

The protein localises to the secreted. Functionally, antibacterial activity against representative Gram-negative and Gram-positive bacteria and exhibits a very high hemolytic activity. The sequence is that of Brevinin-1T from Rana temporaria (European common frog).